Consider the following 373-residue polypeptide: DNA dC-&gt;dU-editing enzyme APOBEC-3F (373 aa).

2 CMP/dCMP-type deaminase domains span residues 29-137 (RRNT…LCRL) and 174-321 (DDNY…LRSL). A (Microbial infection) Glycyl lysine isopeptide (Lys-Gly) (interchain with G-Cter in ubiquitin) cross-link involves residue Lys-52. Zn(2+) contacts are provided by His-65, Cys-96, and Cys-99. A (Microbial infection) Glycyl lysine isopeptide (Lys-Gly) (interchain with G-Cter in ubiquitin) cross-link involves residue Lys-234. His-249 is a Zn(2+) binding site. The active-site Proton donor is Glu-251. Zn(2+)-binding residues include Cys-280 and Cys-283. A disulfide bridge connects residues Cys-280 and Cys-283. Residues Lys-334, Lys-352, Lys-355, and Lys-358 each participate in a (Microbial infection) Glycyl lysine isopeptide (Lys-Gly) (interchain with G-Cter in ubiquitin) cross-link.

The protein belongs to the cytidine and deoxycytidylate deaminase family. In terms of assembly, homodimer. Interacts with APOBEC3G in an RNA-dependent manner. Interacts with AGO1, AGO2 and AGO3. As to quaternary structure, (Microbial infection) Interacts with HIV-1 Vif, leading to its ubiquitination and degradation by the proteasome. In the absence of Vif protein, specifically packaged into HIV-1 virions. Requires Zn(2+) as cofactor. (Microbial infection) Following infection by HIV-1, ubiquitinated by a cullin-5-RING E3 ubiquitin-protein ligase complex (ECS complex) hijacked by the HIV-1 Vif protein, leading to its degradation. As to expression, widely expressed. Highly expressed in ovary.

It localises to the cytoplasm. The protein resides in the P-body. It catalyses the reaction a 2'-deoxycytidine in single-stranded DNA + H2O + H(+) = a 2'-deoxyuridine in single-stranded DNA + NH4(+). (Microbial infection) Antiviral activity is neutralized by the HIV-1 virion infectivity factor (Vif), that prevents its incorporation into progeny virions by both inhibiting its translation and/or by inducing its ubiquitination and subsequent degradation by the 26S proteasome. Functionally, DNA deaminase (cytidine deaminase) which acts as an inhibitor of retrovirus replication and retrotransposon mobility via deaminase-dependent and -independent mechanisms. Exhibits antiviral activity against viruse such as HIV-1 or HIV-2. After the penetration of retroviral nucleocapsids into target cells of infection and the initiation of reverse transcription, it can induce the conversion of cytosine to uracil in the minus-sense single-strand viral DNA, leading to G-to-A hypermutations in the subsequent plus-strand viral DNA. The resultant detrimental levels of mutations in the proviral genome, along with a deamination-independent mechanism that works prior to the proviral integration, together exert efficient antiretroviral effects in infected target cells. Selectively targets single-stranded DNA and does not deaminate double-stranded DNA or single- or double-stranded RNA. Exhibits antiviral activity also against hepatitis B virus (HBV), equine infectious anemia virus (EIAV), xenotropic MuLV-related virus (XMRV) and simian foamy virus (SFV) and may inhibit the mobility of LTR and non-LTR retrotransposons. May also play a role in the epigenetic regulation of gene expression through the process of active DNA demethylation. This Homo sapiens (Human) protein is DNA dC-&gt;dU-editing enzyme APOBEC-3F.